The sequence spans 292 residues: Cyclin-dependent kinase 5 (292 aa).

Residues 4-286 enclose the Protein kinase domain; it reads YEKLEKIGEG…AEEALQHPYF (283 aa). ATP-binding positions include 10–18 and Lys-33; that span reads IGEGTYGTV. Tyr-15 carries the phosphotyrosine; by ABL1, EPHA4 and FYN modification. A Phosphothreonine modification is found at Thr-17. The residue at position 56 (Lys-56) is an N6-acetyllysine. Ser-72 is subject to Phosphoserine. Residue Asp-126 is the Proton acceptor of the active site. Ser-159 carries the post-translational modification Phosphoserine.

The protein belongs to the protein kinase superfamily. CMGC Ser/Thr protein kinase family. CDC2/CDKX subfamily. As to quaternary structure, heterodimer composed of a catalytic subunit CDK5 and a regulatory subunit CDK5R1 (p25) and macromolecular complex composed of at least CDK5, CDK5R1 (p35) and CDK5RAP1 or CDK5RAP2 or CDK5RAP3. Only the heterodimer shows kinase activity. Under neurotoxic stress and neuronal injury conditions, p35 is cleaved by calpain to generate p25 that hyperactivates CDK5, that becomes functionally disabled and often toxic. Found in a trimolecular complex with CABLES1 and ABL1. Interacts with CABLES1 and CABLES2. Interacts with AATK and GSTP1. Binds to HDAC1 when in complex with p25. Interaction with myristoylation p35 promotes CDK5 association with membranes. Both isoforms 1 and 2 interacts with beta-catenin/CTNNB1. Interacts with delta-catenin/CTNND2 and APEX1. Interacts with P53/TP53 in neurons. Interacts with PTK2/FAK1. Interacts with EPHA4; may mediate the activation of NGEF by EPHA4. The complex p35/CDK5 interacts with CLOCK. Interacts with HTR6. Phosphorylation on Tyr-15 by ABL1 and FYN, and on Ser-159 by casein kinase 1 promotes kinase activity. By contrast, phosphorylation at Thr-14 inhibits activity. In terms of processing, phosphorylation at Ser-159 is essential for maximal catalytic activity. In terms of tissue distribution, expressed in hippocampal neuronal synaptic termini (at protein level). Expressed predominantly in post-mitotic neurons of the central and peripheral nervous system.

It is found in the cytoplasm. The protein localises to the nucleus. The protein resides in the cell membrane. Its subcellular location is the perikaryon. It localises to the cell projection. It is found in the lamellipodium. The protein localises to the growth cone. The protein resides in the postsynaptic density. Its subcellular location is the synapse. The catalysed reaction is L-seryl-[protein] + ATP = O-phospho-L-seryl-[protein] + ADP + H(+). It carries out the reaction L-threonyl-[protein] + ATP = O-phospho-L-threonyl-[protein] + ADP + H(+). With respect to regulation, inhibited by 2-(1-ethyl-2-hydroxyethylamino)-6-benzylamino-9-isopropylpurine (roscovitine), 1-isopropyl-4-aminobenzyl-6-ether-linked benzimidazoles, resveratrol, AT-7519 and olomoucine. Activated by CDK5R1 (p35) and CDK5R2 (p39) during the development of the nervous system; degradation of CDK5R1 (p35) and CDK5R2 (p39) by proteasome result in down regulation of kinase activity, during this process, CDK5 phosphorylates p35 and induces its ubiquitination and subsequent degradation. Kinase activity is mainly determined by the amount of p35 available and subcellular location; reversible association to plasma membrane inhibits activity. Long-term inactivation as well as CDK5R1 (p25)-mediated hyperactivation of CDK5 triggers cell death. The pro-death activity of hyperactivated CDK5 is suppressed by membrane association of CDK5, via myristoylation of p35. Brain-derived neurotrophic factor, glial-derived neurotrophic factor, nerve growth factor (NGF), retinoic acid, laminin and neuregulin promote activity. Neurotoxicity enhances nuclear activity, thus leading to MEF2 phosphorylation and inhibition prior to apoptosis of cortical neurons. Repression by GSTP1 via p25/p35 translocation prevents neurodegeneration. In terms of biological role, proline-directed serine/threonine-protein kinase essential for neuronal cell cycle arrest and differentiation and may be involved in apoptotic cell death in neuronal diseases by triggering abortive cell cycle re-entry. Interacts with D1 and D3-type G1 cyclins. Phosphorylates SRC, NOS3, VIM/vimentin, p35/CDK5R1, MEF2A, SIPA1L1, SH3GLB1, PXN, PAK1, MCAM/MUC18, SEPT5, SYN1, DNM1, AMPH, SYNJ1, CDK16, RAC1, RHOA, CDC42, TONEBP/NFAT5, MAPT/TAU, MAP1B, histone H1, p53/TP53, HDAC1, APEX1, PTK2/FAK1, huntingtin/HTT, ATM, MAP2, NEFH and NEFM. Regulates several neuronal development and physiological processes including neuronal survival, migration and differentiation, axonal and neurite growth, synaptogenesis, oligodendrocyte differentiation, synaptic plasticity and neurotransmission, by phosphorylating key proteins. Negatively regulates the CACNA1B/CAV2.2 -mediated Ca(2+) release probability at hippocampal neuronal soma and synaptic terminals. Activated by interaction with CDK5R1 (p35) and CDK5R2 (p39), especially in postmitotic neurons, and promotes CDK5R1 (p35) expression in an autostimulation loop. Phosphorylates many downstream substrates such as Rho and Ras family small GTPases (e.g. PAK1, RAC1, RHOA, CDC42) or microtubule-binding proteins (e.g. MAPT/TAU, MAP2, MAP1B), and modulates actin dynamics to regulate neurite growth and/or spine morphogenesis. Also phosphorylates exocytosis associated proteins such as MCAM/MUC18, SEPT5, SYN1, and CDK16/PCTAIRE1 as well as endocytosis associated proteins such as DNM1, AMPH and SYNJ1 at synaptic terminals. In the mature central nervous system (CNS), regulates neurotransmitter movements by phosphorylating substrates associated with neurotransmitter release and synapse plasticity; synaptic vesicle exocytosis, vesicles fusion with the presynaptic membrane, and endocytosis. Promotes cell survival by activating anti-apoptotic proteins BCL2 and STAT3, and negatively regulating of JNK3/MAPK10 activity. Phosphorylation of p53/TP53 in response to genotoxic and oxidative stresses enhances its stabilization by preventing ubiquitin ligase-mediated proteasomal degradation, and induces transactivation of p53/TP53 target genes, thus regulating apoptosis. Phosphorylation of p35/CDK5R1 enhances its stabilization by preventing calpain-mediated proteolysis producing p25/CDK5R1 and avoiding ubiquitin ligase-mediated proteasomal degradation. During aberrant cell-cycle activity and DNA damage, p25/CDK5 activity elicits cell-cycle activity and double-strand DNA breaks that precedes neuronal death by deregulating HDAC1. DNA damage triggered phosphorylation of huntingtin/HTT in nuclei of neurons protects neurons against polyglutamine expansion as well as DNA damage mediated toxicity. Phosphorylation of PXN reduces its interaction with PTK2/FAK1 in matrix-cell focal adhesions (MCFA) during oligodendrocytes (OLs) differentiation. Negative regulator of Wnt/beta-catenin signaling pathway. Activator of the GAIT (IFN-gamma-activated inhibitor of translation) pathway, which suppresses expression of a post-transcriptional regulon of proinflammatory genes in myeloid cells; phosphorylates the linker domain of glutamyl-prolyl tRNA synthetase (EPRS) in a IFN-gamma-dependent manner, the initial event in assembly of the GAIT complex. Phosphorylation of SH3GLB1 is required for autophagy induction in starved neurons. Phosphorylation of TONEBP/NFAT5 in response to osmotic stress mediates its rapid nuclear localization. MEF2 is inactivated by phosphorylation in nucleus in response to neurotoxin, thus leading to neuronal apoptosis. APEX1 AP-endodeoxyribonuclease is repressed by phosphorylation, resulting in accumulation of DNA damage and contributing to neuronal death. NOS3 phosphorylation down regulates NOS3-derived nitrite (NO) levels. SRC phosphorylation mediates its ubiquitin-dependent degradation and thus leads to cytoskeletal reorganization. May regulate endothelial cell migration and angiogenesis via the modulation of lamellipodia formation. Involved in dendritic spine morphogenesis by mediating the EFNA1-EPHA4 signaling. The complex p35/CDK5 participates in the regulation of the circadian clock by modulating the function of CLOCK protein: phosphorylates CLOCK at 'Thr-451' and 'Thr-461' and regulates the transcriptional activity of the CLOCK-BMAL1 heterodimer in association with altered stability and subcellular distribution. The sequence is that of Cyclin-dependent kinase 5 from Rattus norvegicus (Rat).